A 126-amino-acid chain; its full sequence is Holo-[acyl-carrier-protein] synthase (126 aa).

Residues aspartate 9 and glutamate 58 each coordinate Mg(2+).

Belongs to the P-Pant transferase superfamily. AcpS family. Mg(2+) serves as cofactor.

Its subcellular location is the cytoplasm. The catalysed reaction is apo-[ACP] + CoA = holo-[ACP] + adenosine 3',5'-bisphosphate + H(+). Its function is as follows. Transfers the 4'-phosphopantetheine moiety from coenzyme A to a Ser of acyl-carrier-protein. This is Holo-[acyl-carrier-protein] synthase from Buchnera aphidicola subsp. Acyrthosiphon pisum (strain APS) (Acyrthosiphon pisum symbiotic bacterium).